The sequence spans 335 residues: Cytoskeleton protein RodZ (335 aa).

At Met1–Gly111 the chain is on the cytoplasmic side. One can recognise an HTH cro/C1-type domain in the interval Leu19 to Leu71. The H-T-H motif DNA-binding region spans Gln30 to Glu49. The helical; Signal-anchor for type II membrane protein transmembrane segment at Trp112 to Trp132 threads the bilayer. Over Trp133–Gln335 the chain is Periplasmic. Polar residues predominate over residues Asp148–Leu164. Residues Asp148 to Thr244 form a disordered region. Composition is skewed to low complexity over residues Asp165–Gln205 and Asp217–Asp239.

The protein belongs to the RodZ family.

It is found in the cell inner membrane. Cytoskeletal protein that is involved in cell-shape control through regulation of the length of the long axis. This Escherichia coli O81 (strain ED1a) protein is Cytoskeleton protein RodZ.